The chain runs to 385 residues: Probable tRNA sulfurtransferase (385 aa).

Residues Asp-57–Lys-160 form the THUMP domain. ATP-binding positions include Met-180–Leu-181, Tyr-205–Tyr-206, Arg-262, Gly-284, and Gln-293.

It belongs to the ThiI family.

Its subcellular location is the cytoplasm. It carries out the reaction [ThiI sulfur-carrier protein]-S-sulfanyl-L-cysteine + a uridine in tRNA + 2 reduced [2Fe-2S]-[ferredoxin] + ATP + H(+) = [ThiI sulfur-carrier protein]-L-cysteine + a 4-thiouridine in tRNA + 2 oxidized [2Fe-2S]-[ferredoxin] + AMP + diphosphate. It catalyses the reaction [ThiS sulfur-carrier protein]-C-terminal Gly-Gly-AMP + S-sulfanyl-L-cysteinyl-[cysteine desulfurase] + AH2 = [ThiS sulfur-carrier protein]-C-terminal-Gly-aminoethanethioate + L-cysteinyl-[cysteine desulfurase] + A + AMP + 2 H(+). It functions in the pathway cofactor biosynthesis; thiamine diphosphate biosynthesis. Catalyzes the ATP-dependent transfer of a sulfur to tRNA to produce 4-thiouridine in position 8 of tRNAs, which functions as a near-UV photosensor. Also catalyzes the transfer of sulfur to the sulfur carrier protein ThiS, forming ThiS-thiocarboxylate. This is a step in the synthesis of thiazole, in the thiamine biosynthesis pathway. The sulfur is donated as persulfide by IscS. The polypeptide is Probable tRNA sulfurtransferase (Clostridium perfringens (strain ATCC 13124 / DSM 756 / JCM 1290 / NCIMB 6125 / NCTC 8237 / Type A)).